Consider the following 597-residue polypeptide: Elongation factor 4 (597 aa).

The region spanning 2-184 (KNIRNFSIIA…EIVAKIPAPA (183 aa)) is the tr-type G domain. GTP contacts are provided by residues 14-19 (DHGKST) and 131-134 (NKID).

Belongs to the TRAFAC class translation factor GTPase superfamily. Classic translation factor GTPase family. LepA subfamily.

The protein resides in the cell inner membrane. The enzyme catalyses GTP + H2O = GDP + phosphate + H(+). Functionally, required for accurate and efficient protein synthesis under certain stress conditions. May act as a fidelity factor of the translation reaction, by catalyzing a one-codon backward translocation of tRNAs on improperly translocated ribosomes. Back-translocation proceeds from a post-translocation (POST) complex to a pre-translocation (PRE) complex, thus giving elongation factor G a second chance to translocate the tRNAs correctly. Binds to ribosomes in a GTP-dependent manner. The chain is Elongation factor 4 from Neisseria meningitidis serogroup A / serotype 4A (strain DSM 15465 / Z2491).